A 198-amino-acid chain; its full sequence is FMN-dependent NADH:quinone oxidoreductase (198 aa).

FMN contacts are provided by residues Ser-10, 16–18, 94–97, and 138–141; these read SQS, MYNF, and TRGG.

The protein belongs to the azoreductase type 1 family. In terms of assembly, homodimer. It depends on FMN as a cofactor.

It catalyses the reaction 2 a quinone + NADH + H(+) = 2 a 1,4-benzosemiquinone + NAD(+). The catalysed reaction is N,N-dimethyl-1,4-phenylenediamine + anthranilate + 2 NAD(+) = 2-(4-dimethylaminophenyl)diazenylbenzoate + 2 NADH + 2 H(+). In terms of biological role, quinone reductase that provides resistance to thiol-specific stress caused by electrophilic quinones. Its function is as follows. Also exhibits azoreductase activity. Catalyzes the reductive cleavage of the azo bond in aromatic azo compounds to the corresponding amines. This is FMN-dependent NADH:quinone oxidoreductase from Shewanella oneidensis (strain ATCC 700550 / JCM 31522 / CIP 106686 / LMG 19005 / NCIMB 14063 / MR-1).